Here is a 347-residue protein sequence, read N- to C-terminus: MDTFFSFYVLPALLILLKSVVLIVVLLIFVAYILYADRKIWAAVQLRRGPNVVGPWGTLQAFADLLKFVFKEPVIPSGANKGVFLLAPLVSAVLAISAWAVIPVNQGWAIANVNVGILYVFAISSLEVYGVIMGGWASNSKYPFLGALRSAAQMVSYEVSIGFVIVTVLLTAGSLNLSDIVLSQHDGIGTRLGLPNTFLDWNWLALFPMFIIFFISALAETNRPPFDLVEAESELVAGHMVEYSSTPFLLFFLGEYVAIVLMCALATILFLGGWLPPFDFVPFTWVPGVIWFVLKVCFVFFGISMVKAFVPRYRYDQLMRLGWKVFLPISLFMVVATAAFLKITGFA.

8 helical membrane passes run 13–33, 82–102, 115–135, 161–181, 198–218, 248–268, 283–303, and 321–341; these read LLILLKSVVLIVVLLIFVAYI, GVFLLAPLVSAVLAISAWAVI, VGILYVFAISSLEVYGVIMGG, IGFVIVTVLLTAGSLNLSDIV, FLDWNWLALFPMFIIFFISAL, FLLFFLGEYVAIVLMCALATI, FTWVPGVIWFVLKVCFVFFGI, and LGWKVFLPISLFMVVATAAFL.

Belongs to the complex I subunit 1 family. NDH-1 is composed of 14 different subunits. Subunits NuoA, H, J, K, L, M, N constitute the membrane sector of the complex.

It is found in the cell inner membrane. The enzyme catalyses a quinone + NADH + 5 H(+)(in) = a quinol + NAD(+) + 4 H(+)(out). NDH-1 shuttles electrons from NADH, via FMN and iron-sulfur (Fe-S) centers, to quinones in the respiratory chain. The immediate electron acceptor for the enzyme in this species is believed to be ubiquinone. Couples the redox reaction to proton translocation (for every two electrons transferred, four hydrogen ions are translocated across the cytoplasmic membrane), and thus conserves the redox energy in a proton gradient. This subunit may bind ubiquinone. This chain is NADH-quinone oxidoreductase subunit H, found in Mesorhizobium japonicum (strain LMG 29417 / CECT 9101 / MAFF 303099) (Mesorhizobium loti (strain MAFF 303099)).